Here is a 255-residue protein sequence, read N- to C-terminus: MLAKRILPCLDVKAGRVVKGVNFVDLRDAGDPVELAQAYDAAGADELVFLDIAATHEERQILVDVVYRTAEQVFIPLTVSGGINDLETIRQLPRAGADKVSINSAAARDPDLIRRASDRFGSQCIVVAIDARRRTDPDNPGWDVYVRGGRENTGIDALTWAETVARNGAGELLVTSMDADGTQAGYDLELTRAIADRVEIPVIASGGAGTCEDIAEAFRTGHAEAALLASLLHYGQLTIAEIKDHLRSAQIPTRP.

Catalysis depends on residues aspartate 11 and aspartate 130.

Belongs to the HisA/HisF family. Heterodimer of HisH and HisF.

It localises to the cytoplasm. The catalysed reaction is 5-[(5-phospho-1-deoxy-D-ribulos-1-ylimino)methylamino]-1-(5-phospho-beta-D-ribosyl)imidazole-4-carboxamide + L-glutamine = D-erythro-1-(imidazol-4-yl)glycerol 3-phosphate + 5-amino-1-(5-phospho-beta-D-ribosyl)imidazole-4-carboxamide + L-glutamate + H(+). The protein operates within amino-acid biosynthesis; L-histidine biosynthesis; L-histidine from 5-phospho-alpha-D-ribose 1-diphosphate: step 5/9. In terms of biological role, IGPS catalyzes the conversion of PRFAR and glutamine to IGP, AICAR and glutamate. The HisF subunit catalyzes the cyclization activity that produces IGP and AICAR from PRFAR using the ammonia provided by the HisH subunit. This is Imidazole glycerol phosphate synthase subunit HisF from Synechococcus sp. (strain ATCC 27144 / PCC 6301 / SAUG 1402/1) (Anacystis nidulans).